The chain runs to 171 residues: RxLR effector protein CRE7 (171 aa).

A signal peptide spans 1–23 (MRAIAILLAVVATIFASLHGVSA). A RxLR-dEER motif is present at residues 46–59 (RRLRQTGDASDEER).

It belongs to the RxLR effector family.

It is found in the secreted. It localises to the host cell. Its function is as follows. Effector that is involved in host plant infection. Contributes to virulence during the early infection stage, by inhibiting plant defense responses induced by both PAMP-triggered immunity (PTI) and effector-triggered immunity (ETI). The sequence is that of RxLR effector protein CRE7 from Phytophthora infestans (strain T30-4) (Potato late blight agent).